Here is a 305-residue protein sequence, read N- to C-terminus: Ribosomal protein L11 methyltransferase (305 aa).

Residues threonine 149, glycine 176, aspartate 198, and asparagine 240 each coordinate S-adenosyl-L-methionine.

The protein belongs to the methyltransferase superfamily. PrmA family.

The protein resides in the cytoplasm. The catalysed reaction is L-lysyl-[protein] + 3 S-adenosyl-L-methionine = N(6),N(6),N(6)-trimethyl-L-lysyl-[protein] + 3 S-adenosyl-L-homocysteine + 3 H(+). In terms of biological role, methylates ribosomal protein L11. This is Ribosomal protein L11 methyltransferase from Trichlorobacter lovleyi (strain ATCC BAA-1151 / DSM 17278 / SZ) (Geobacter lovleyi).